We begin with the raw amino-acid sequence, 261 residues long: Oligodendrocyte transcription factor 1 (261 aa).

Residues 41–105 (PPISSSSSTS…LRRKINSRER (65 aa)) are disordered. Residues 44-56 (SSSSSTSSSSTAS) show a composition bias toward low complexity. One can recognise a bHLH domain in the interval 95-154 (QLRRKINSRERKRMQDLNLAMDALREVILPYSAAHCQGAPGRKLSKIATLLLARNYILLL).

In terms of tissue distribution, expressed specifically in the brain, including the corpus callosum, hippocampal and cerebral white matter. Also detected in cells scattered in gray matter, most probably in oligodendrocytes.

It is found in the nucleus. In terms of biological role, promotes formation and maturation of oligodendrocytes, especially within the brain. Cooperates with OLIG2 to establish the pMN domain of the embryonic neural tube. This chain is Oligodendrocyte transcription factor 1 (Olig1), found in Rattus norvegicus (Rat).